Reading from the N-terminus, the 364-residue chain is tRNA 2-selenouridine synthase (364 aa).

Residues 14-137 form the Rhodanese domain; the sequence is LIADTPIIDV…LRQTTIQATI (124 aa). Cys97 serves as the catalytic S-selanylcysteine intermediate.

This sequence belongs to the SelU family. Monomer.

It carries out the reaction 5-methylaminomethyl-2-thiouridine(34) in tRNA + selenophosphate + (2E)-geranyl diphosphate + H2O + H(+) = 5-methylaminomethyl-2-selenouridine(34) in tRNA + (2E)-thiogeraniol + phosphate + diphosphate. The enzyme catalyses 5-methylaminomethyl-2-thiouridine(34) in tRNA + (2E)-geranyl diphosphate = 5-methylaminomethyl-S-(2E)-geranyl-thiouridine(34) in tRNA + diphosphate. The catalysed reaction is 5-methylaminomethyl-S-(2E)-geranyl-thiouridine(34) in tRNA + selenophosphate + H(+) = 5-methylaminomethyl-2-(Se-phospho)selenouridine(34) in tRNA + (2E)-thiogeraniol. It catalyses the reaction 5-methylaminomethyl-2-(Se-phospho)selenouridine(34) in tRNA + H2O = 5-methylaminomethyl-2-selenouridine(34) in tRNA + phosphate. Its function is as follows. Involved in the post-transcriptional modification of the uridine at the wobble position (U34) of tRNA(Lys), tRNA(Glu) and tRNA(Gln). Catalyzes the conversion of 2-thiouridine (S2U-RNA) to 2-selenouridine (Se2U-RNA). Acts in a two-step process involving geranylation of 2-thiouridine (S2U) to S-geranyl-2-thiouridine (geS2U) and subsequent selenation of the latter derivative to 2-selenouridine (Se2U) in the tRNA chain. In Escherichia coli O139:H28 (strain E24377A / ETEC), this protein is tRNA 2-selenouridine synthase.